The sequence spans 298 residues: Protoheme IX farnesyltransferase (298 aa).

9 helical membrane-spanning segments follow: residues 26 to 46 (VVGHIVFTAIIGMFLAVPGVP), 52 to 72 (FWASLGIGFAAASAAALNHFL), 98 to 118 (VVGFALVLGIVAMAILIAFVN), 120 to 140 (LTAFLTFLSLIGYAVIYTVYL), 148 to 168 (IVIGGAAGAAPPVLGWCAVTG), 174 to 194 (ALLLFLLIFVWTPPHFWAYAI), 214 to 234 (IAFTQLHILLYTILLFLAGLM), 241 to 261 (SGEIYLAAALIFGGIFVYYAI), and 278 to 298 (YSLVYLVGIFSALLVDHYIVL).

It belongs to the UbiA prenyltransferase family. Protoheme IX farnesyltransferase subfamily.

The protein resides in the cell inner membrane. It carries out the reaction heme b + (2E,6E)-farnesyl diphosphate + H2O = Fe(II)-heme o + diphosphate. It participates in porphyrin-containing compound metabolism; heme O biosynthesis; heme O from protoheme: step 1/1. Converts heme B (protoheme IX) to heme O by substitution of the vinyl group on carbon 2 of heme B porphyrin ring with a hydroxyethyl farnesyl side group. This chain is Protoheme IX farnesyltransferase, found in Methylococcus capsulatus (strain ATCC 33009 / NCIMB 11132 / Bath).